A 600-amino-acid chain; its full sequence is Integrator complex subunit 11 (600 aa).

Histidine 68, histidine 70, aspartate 72, histidine 73, histidine 157, and aspartate 178 together coordinate Zn(2+). The HXHXDH motif motif lies at 68-73; it reads HFHLDH. Glutamate 203 is a catalytic residue. Residue lysine 381 forms a Glycyl lysine isopeptide (Lys-Gly) (interchain with G-Cter in SUMO) linkage. A Zn(2+)-binding site is contributed by histidine 414. Residues lysine 462 and lysine 475 each participate in a glycyl lysine isopeptide (Lys-Gly) (interchain with G-Cter in SUMO) cross-link. The short motif at 469-479 is the Nuclear localization signal element; sequence LLPEAKKPRLL.

It belongs to the metallo-beta-lactamase superfamily. RNA-metabolizing metallo-beta-lactamase-like family. INTS11 subfamily. As to quaternary structure, component of the Integrator complex, composed of core subunits INTS1, INTS2, INTS3, INTS4, INTS5, INTS6, INTS7, INTS8, INTS9/RC74, INTS10, INTS11/CPSF3L, INTS12, INTS13, INTS14 and INTS15. The core complex associates with protein phosphatase 2A subunits PPP2CA and PPP2R1A, to form the Integrator-PP2A (INTAC) complex. INTS11 is part of the RNA endonuclease subcomplex, composed of INTS4, INTS9, INTS11 and inositol hexakisphosphate (InsP6). Interacts with WDR73; interaction is required for the assembly of the RNA endonuclease subcomplex in the cytoplasm. Interacts with BRAT1; interaction is required for the assembly of the RNA endonuclease subcomplex and inhibits the endonuclease activity of INTS11 before formation of mature integrator complex. It depends on Zn(2+) as a cofactor. In terms of processing, sumoylated; sumoylation regulates its subcellular location and is required for integrator complex integrity.

It is found in the nucleus. Its subcellular location is the cytoplasm. With respect to regulation, the RNA endonuclease activity is inhibited by BRAT1 that forms hyrogen bond and hydrophobic interactions with the active site. Its function is as follows. RNA endonuclease component of the integrator complex, a multiprotein complex that terminates RNA polymerase II (Pol II) transcription in the promoter-proximal region of genes. The integrator complex provides a quality checkpoint during transcription elongation by driving premature transcription termination of transcripts that are unfavorably configured for transcriptional elongation: the complex terminates transcription by (1) catalyzing dephosphorylation of the C-terminal domain (CTD) of Pol II subunit POLR2A/RPB1 and SUPT5H/SPT5, (2) degrading the exiting nascent RNA transcript via endonuclease activity and (3) promoting the release of Pol II from bound DNA. The integrator complex is also involved in terminating the synthesis of non-coding Pol II transcripts, such as enhancer RNAs (eRNAs), small nuclear RNAs (snRNAs), telomerase RNAs and long non-coding RNAs (lncRNAs). Within the integrator complex, INTS11 constitutes the RNA endonuclease subunit that degrades exiting nascent RNA transcripts. Mediates recruitment of cytoplasmic dynein to the nuclear envelope, probably as component of the integrator complex. This Rattus norvegicus (Rat) protein is Integrator complex subunit 11 (Ints11).